Consider the following 196-residue polypeptide: Ribosome maturation factor RimP (196 aa).

It belongs to the RimP family.

It localises to the cytoplasm. Its function is as follows. Required for maturation of 30S ribosomal subunits. The protein is Ribosome maturation factor RimP of Lawsonia intracellularis (strain PHE/MN1-00).